Here is a 166-residue protein sequence, read N- to C-terminus: Interferon gamma (166 aa).

The signal sequence occupies residues 1–23 (MKYTSYFLALLLCVLLGFSGSYG). Position 24 is a pyrrolidone carboxylic acid (Q24). N-linked (GlcNAc...) asparagine glycosylation is found at N39 and N106.

Belongs to the type II (or gamma) interferon family. Homodimer. Interacts with IFNGR1 (via extracellular domain); this interaction promotes IFNGR1 dimerization. Released primarily from activated T lymphocytes.

It is found in the secreted. In terms of biological role, type II interferon produced by immune cells such as T-cells and NK cells that plays crucial roles in antimicrobial, antiviral, and antitumor responses by activating effector immune cells and enhancing antigen presentation. Primarily signals through the JAK-STAT pathway after interaction with its receptor IFNGR1 to affect gene regulation. Upon IFNG binding, IFNGR1 intracellular domain opens out to allow association of downstream signaling components JAK2, JAK1 and STAT1, leading to STAT1 activation, nuclear translocation and transcription of IFNG-regulated genes. Many of the induced genes are transcription factors such as IRF1 that are able to further drive regulation of a next wave of transcription. Plays a role in class I antigen presentation pathway by inducing a replacement of catalytic proteasome subunits with immunoproteasome subunits. In turn, increases the quantity, quality, and repertoire of peptides for class I MHC loading. Increases the efficiency of peptide generation also by inducing the expression of activator PA28 that associates with the proteasome and alters its proteolytic cleavage preference. Up-regulates as well MHC II complexes on the cell surface by promoting expression of several key molecules such as cathepsins B/CTSB, H/CTSH, and L/CTSL. Participates in the regulation of hematopoietic stem cells during development and under homeostatic conditions by affecting their development, quiescence, and differentiation. In Bubalus bubalis (Domestic water buffalo), this protein is Interferon gamma (IFNG).